Reading from the N-terminus, the 342-residue chain is RNA 3'-terminal phosphate cyclase (342 aa).

ATP-binding positions include Gln-102 and 283–287 (HLADQ). The Tele-AMP-histidine intermediate role is filled by His-308.

This sequence belongs to the RNA 3'-terminal cyclase family. Type 1 subfamily.

It localises to the cytoplasm. The catalysed reaction is a 3'-end 3'-phospho-ribonucleotide-RNA + ATP = a 3'-end 2',3'-cyclophospho-ribonucleotide-RNA + AMP + diphosphate. Its function is as follows. Catalyzes the conversion of 3'-phosphate to a 2',3'-cyclic phosphodiester at the end of RNA. The mechanism of action of the enzyme occurs in 3 steps: (A) adenylation of the enzyme by ATP; (B) transfer of adenylate to an RNA-N3'P to produce RNA-N3'PP5'A; (C) and attack of the adjacent 2'-hydroxyl on the 3'-phosphorus in the diester linkage to produce the cyclic end product. The biological role of this enzyme is unknown but it is likely to function in some aspects of cellular RNA processing. The sequence is that of RNA 3'-terminal phosphate cyclase from Pseudomonas fluorescens (strain ATCC BAA-477 / NRRL B-23932 / Pf-5).